The sequence spans 266 residues: Auxin-responsive protein IAA21 (266 aa).

The short motif at 24–28 is the EAR-like (transcriptional repression) element; the sequence is LRLGL. A disordered region spans residues 27-50; sequence GLPGTAEEAESEGGGGGGTDAAPL. A PB1 domain is found at 146-248; the sequence is CLYVKVSMDG…SCRRLRIMKG (103 aa).

This sequence belongs to the Aux/IAA family. Homodimers and heterodimers. Highly expressed in flowers. Expressed in roots and seedlings.

It localises to the nucleus. Its function is as follows. Aux/IAA proteins are short-lived transcriptional factors that function as repressors of early auxin response genes at low auxin concentrations. In Oryza sativa subsp. japonica (Rice), this protein is Auxin-responsive protein IAA21 (IAA21).